Here is a 152-residue protein sequence, read N- to C-terminus: UPF0266 membrane protein KPN78578_23010 (152 aa).

The next 3 helical transmembrane spans lie at Leu6–Met26, Val45–His65, and Thr67–Ile87.

This sequence belongs to the UPF0266 family.

It is found in the cell inner membrane. This Klebsiella pneumoniae subsp. pneumoniae (strain ATCC 700721 / MGH 78578) protein is UPF0266 membrane protein KPN78578_23010.